The primary structure comprises 207 residues: Thiamine-phosphate synthase (207 aa).

Residues 35–39 (QYRDK) and Asn67 contribute to the 4-amino-2-methyl-5-(diphosphooxymethyl)pyrimidine site. Residues Asp68 and Asp86 each contribute to the Mg(2+) site. Thr105 serves as a coordination point for 4-amino-2-methyl-5-(diphosphooxymethyl)pyrimidine. Residue 132–134 (SVT) participates in 2-[(2R,5Z)-2-carboxy-4-methylthiazol-5(2H)-ylidene]ethyl phosphate binding. Lys135 serves as a coordination point for 4-amino-2-methyl-5-(diphosphooxymethyl)pyrimidine. Residue Gly162 participates in 2-[(2R,5Z)-2-carboxy-4-methylthiazol-5(2H)-ylidene]ethyl phosphate binding.

The protein belongs to the thiamine-phosphate synthase family. The cofactor is Mg(2+).

The enzyme catalyses 2-[(2R,5Z)-2-carboxy-4-methylthiazol-5(2H)-ylidene]ethyl phosphate + 4-amino-2-methyl-5-(diphosphooxymethyl)pyrimidine + 2 H(+) = thiamine phosphate + CO2 + diphosphate. It catalyses the reaction 2-(2-carboxy-4-methylthiazol-5-yl)ethyl phosphate + 4-amino-2-methyl-5-(diphosphooxymethyl)pyrimidine + 2 H(+) = thiamine phosphate + CO2 + diphosphate. It carries out the reaction 4-methyl-5-(2-phosphooxyethyl)-thiazole + 4-amino-2-methyl-5-(diphosphooxymethyl)pyrimidine + H(+) = thiamine phosphate + diphosphate. Its pathway is cofactor biosynthesis; thiamine diphosphate biosynthesis; thiamine phosphate from 4-amino-2-methyl-5-diphosphomethylpyrimidine and 4-methyl-5-(2-phosphoethyl)-thiazole: step 1/1. In terms of biological role, condenses 4-methyl-5-(beta-hydroxyethyl)thiazole monophosphate (THZ-P) and 2-methyl-4-amino-5-hydroxymethyl pyrimidine pyrophosphate (HMP-PP) to form thiamine monophosphate (TMP). This Pseudomonas putida (strain W619) protein is Thiamine-phosphate synthase.